Reading from the N-terminus, the 364-residue chain is Aminomethyltransferase (364 aa).

Belongs to the GcvT family. The glycine cleavage system is composed of four proteins: P, T, L and H.

It catalyses the reaction N(6)-[(R)-S(8)-aminomethyldihydrolipoyl]-L-lysyl-[protein] + (6S)-5,6,7,8-tetrahydrofolate = N(6)-[(R)-dihydrolipoyl]-L-lysyl-[protein] + (6R)-5,10-methylene-5,6,7,8-tetrahydrofolate + NH4(+). In terms of biological role, the glycine cleavage system catalyzes the degradation of glycine. The protein is Aminomethyltransferase of Escherichia coli O127:H6 (strain E2348/69 / EPEC).